The sequence spans 136 residues: Protein NrdI (136 aa).

It belongs to the NrdI family.

Its function is as follows. Probably involved in ribonucleotide reductase function. This chain is Protein NrdI, found in Escherichia coli O127:H6 (strain E2348/69 / EPEC).